A 278-amino-acid chain; its full sequence is Sulfur carrier protein FdhD (278 aa).

The active-site Cysteine persulfide intermediate is Cys113. Residue 251–256 (FCRNGR) participates in Mo-bis(molybdopterin guanine dinucleotide) binding.

This sequence belongs to the FdhD family.

It is found in the cytoplasm. Functionally, required for formate dehydrogenase (FDH) activity. Acts as a sulfur carrier protein that transfers sulfur from IscS to the molybdenum cofactor prior to its insertion into FDH. This chain is Sulfur carrier protein FdhD, found in Shewanella oneidensis (strain ATCC 700550 / JCM 31522 / CIP 106686 / LMG 19005 / NCIMB 14063 / MR-1).